A 369-amino-acid polypeptide reads, in one-letter code: Quinolinate synthase (369 aa).

Residues histidine 47 and serine 64 each coordinate iminosuccinate. Residue cysteine 111 participates in [4Fe-4S] cluster binding. Residues 142-144 and serine 163 each bind iminosuccinate; that span reads YVN. Cysteine 231 provides a ligand contact to [4Fe-4S] cluster. Residues 257-259 and threonine 274 each bind iminosuccinate; that span reads HPE. Cysteine 321 serves as a coordination point for [4Fe-4S] cluster.

This sequence belongs to the quinolinate synthase family. Type 3 subfamily. [4Fe-4S] cluster is required as a cofactor.

The protein localises to the cytoplasm. The catalysed reaction is iminosuccinate + dihydroxyacetone phosphate = quinolinate + phosphate + 2 H2O + H(+). It functions in the pathway cofactor biosynthesis; NAD(+) biosynthesis; quinolinate from iminoaspartate: step 1/1. In terms of biological role, catalyzes the condensation of iminoaspartate with dihydroxyacetone phosphate to form quinolinate. This is Quinolinate synthase from Bacillus licheniformis (strain ATCC 14580 / DSM 13 / JCM 2505 / CCUG 7422 / NBRC 12200 / NCIMB 9375 / NCTC 10341 / NRRL NRS-1264 / Gibson 46).